Here is a 68-residue protein sequence, read N- to C-terminus: UPF0434 protein H16_A0605 (68 aa).

This sequence belongs to the UPF0434 family.

The polypeptide is UPF0434 protein H16_A0605 (Cupriavidus necator (strain ATCC 17699 / DSM 428 / KCTC 22496 / NCIMB 10442 / H16 / Stanier 337) (Ralstonia eutropha)).